Consider the following 201-residue polypeptide: uncharacterized protein (201 aa).

The span at 64–78 (DNEIKEEEESEEEEK) shows a compositional bias: acidic residues. 2 disordered regions span residues 64 to 114 (DNEI…FKNA) and 182 to 201 (ILPG…LSKQ). The segment covering 96-106 (RNKHGRNRNPR) has biased composition (basic residues). Polar residues predominate over residues 189 to 201 (GNTETVDQGLSKQ).

This is an uncharacterized protein from Ostreid herpesvirus 1 (isolate France) (OsHV-1).